Reading from the N-terminus, the 181-residue chain is dTDP-4-dehydrorhamnose 3,5-epimerase (181 aa).

Substrate is bound by residues Arg-23, Glu-28, 47 to 49, and Arg-59; that span reads QDN. His-62 functions as the Proton acceptor in the catalytic mechanism. Substrate contacts are provided by Lys-71 and His-118. The active-site Proton donor is Tyr-131. Positions 142 and 167 each coordinate substrate.

This sequence belongs to the dTDP-4-dehydrorhamnose 3,5-epimerase family. Homodimer.

It catalyses the reaction dTDP-4-dehydro-6-deoxy-alpha-D-glucose = dTDP-4-dehydro-beta-L-rhamnose. Its pathway is carbohydrate biosynthesis; dTDP-L-rhamnose biosynthesis. It participates in bacterial outer membrane biogenesis; lipopolysaccharide biosynthesis. In terms of biological role, catalyzes the epimerization of the C3' and C5'positions of dTDP-6-deoxy-D-xylo-4-hexulose, forming dTDP-6-deoxy-L-lyxo-4-hexulose. This chain is dTDP-4-dehydrorhamnose 3,5-epimerase (rmlC), found in Pseudomonas aeruginosa (strain ATCC 15692 / DSM 22644 / CIP 104116 / JCM 14847 / LMG 12228 / 1C / PRS 101 / PAO1).